We begin with the raw amino-acid sequence, 739 residues long: Polyphosphate kinase (739 aa).

The interval 22-45 is disordered; the sequence is WHSDNSALAAPPAATTSASQDQLP. The segment covering 27 to 40 has biased composition (low complexity); that stretch reads SALAAPPAATTSAS. Residue asparagine 87 coordinates ATP. Positions 428 and 458 each coordinate Mg(2+). Residue histidine 488 is the Phosphohistidine intermediate of the active site. Tyrosine 521, arginine 621, and histidine 649 together coordinate ATP. The segment at 714–739 is disordered; sequence QWTASPQKGQQVRDHQESLMERHRSR. A compositionally biased stretch (basic and acidic residues) spans 724–739; it reads QVRDHQESLMERHRSR.

This sequence belongs to the polyphosphate kinase 1 (PPK1) family. The cofactor is Mg(2+). In terms of processing, an intermediate of this reaction is the autophosphorylated ppk in which a phosphate is covalently linked to a histidine residue through a N-P bond.

The enzyme catalyses [phosphate](n) + ATP = [phosphate](n+1) + ADP. In terms of biological role, catalyzes the reversible transfer of the terminal phosphate of ATP to form a long-chain polyphosphate (polyP). The chain is Polyphosphate kinase from Mycobacterium leprae (strain TN).